The sequence spans 562 residues: Aureusidin synthase (562 aa).

2 cysteine pairs are disulfide-bonded: Cys-71–Cys-86 and Cys-85–Cys-148. Cu cation contacts are provided by His-147, His-168, His-177, His-301, His-305, and His-335. Positions 151 to 168 (CAGAYNQAGFTNLKLQIH) form a cross-link, 2'-(S-cysteinyl)-histidine (Cys-His).

It belongs to the tyrosinase family. As to quaternary structure, monomer. It depends on Cu(2+) as a cofactor. Post-translationally, glycosylated. In terms of processing, contains probably N- and C-terminal propeptides. As to expression, expressed in petals. Not detected in stems and leaves.

It localises to the vacuole lumen. It carries out the reaction 2',4,4',6'-tetrahydroxychalcone 4'-O-beta-D-glucoside + O2 = aureusidin 6-O-beta-glucoside + H2O. It catalyses the reaction 2 2',3,4,4',6'-pentahydroxychalcone 4'-O-beta-D-glucoside + O2 + 2 H(+) = 2 aureusidin 6-O-beta-glucoside + 2 H2O. The enzyme catalyses 2',3,4,4',6'-pentahydroxychalcone 4'-O-beta-D-glucoside + O2 + H(+) = bracteatin 6-O-beta-glucoside + H2O. With respect to regulation, h(2)O(2) activates the 3-hydroxylation and oxidative cyclization of tetrahydroxychalcone but inhibits reaction with pentahydroxychalcone. Inhibited by phenylthiourea. Its function is as follows. Involved in the biosynthesis of aurones, plant flavonoids that provide yellow coloration to flowers. Can use tetrahydroxychalcone (THC), pentahydroxychalcone (PHC), THC 4'-glucoside and PHC 4'-glucoside as substrates, but not 2'-hydroxychalcone, 4-hydroxychalcone, PHC 3-glucoside, 2',6'-dihydroxy-4,4'-dimethoxychalcone, naringenin, eriodictyol and 4,4',6-trihydroxyaurone. Can also produce bracteatin from PHC. This Antirrhinum majus (Garden snapdragon) protein is Aureusidin synthase (AS1).